Here is a 458-residue protein sequence, read N- to C-terminus: ATP synthase subunit beta (458 aa).

148–155 (GGAGVGKT) is a binding site for ATP.

It belongs to the ATPase alpha/beta chains family. F-type ATPases have 2 components, CF(1) - the catalytic core - and CF(0) - the membrane proton channel. CF(1) has five subunits: alpha(3), beta(3), gamma(1), delta(1), epsilon(1). CF(0) has three main subunits: a(1), b(2) and c(9-12). The alpha and beta chains form an alternating ring which encloses part of the gamma chain. CF(1) is attached to CF(0) by a central stalk formed by the gamma and epsilon chains, while a peripheral stalk is formed by the delta and b chains.

The protein localises to the cell inner membrane. The enzyme catalyses ATP + H2O + 4 H(+)(in) = ADP + phosphate + 5 H(+)(out). Produces ATP from ADP in the presence of a proton gradient across the membrane. The catalytic sites are hosted primarily by the beta subunits. This Shewanella halifaxensis (strain HAW-EB4) protein is ATP synthase subunit beta.